The primary structure comprises 549 residues: Protein wntless homolog (549 aa).

The signal sequence occupies residues 1-34; it reads MAGGAVIENLSNRKLFVIFAGLLVIQIMFFLIGA. The Lumenal segment spans residues 36–236; the sequence is YAPSPSSYME…RLIEIHQNGG (201 aa). The chain crosses the membrane as a helical span at residues 237-257; the sequence is FTLVWLWTKTFMTPVVAICLW. The Cytoplasmic segment spans residues 258–275; that stretch reads WYYNRINQLARNPLLLER. A helical transmembrane segment spans residues 276 to 296; the sequence is AILLLGLSLVILDFPIEWISL. At 297 to 310 the chain is on the lumenal side; sequence TYRIPFLLLISDLR. A helical transmembrane segment spans residues 311 to 331; sequence QGLFYTVLFSFWLIFAGEHLI. Residues 332-345 are Cytoplasmic-facing; the sequence is DDNTRNNLKSYRFN. A helical transmembrane segment spans residues 346-366; sequence LSFIITASLGLLIYDLIERGI. Topologically, residues 367–383 are lumenal; the sequence is QLYDPFYSVWSSPTGSQ. Residues 384–404 traverse the membrane as a helical segment; the sequence is IAYFAIFISAISTVAYFIFLF. Topologically, residues 405 to 439 are cytoplasmic; that stretch reads FKIARVWSTIKSKRSAQIYQTSENRRLKVEGVIYR. Residues 440 to 460 form a helical membrane-spanning segment; that stretch reads FKFLMLFTLLCSAFTIAAYFM. The Lumenal segment spans residues 461–483; the sequence is KQYGEAQLHGDEARDGFLTGSTS. A helical transmembrane segment spans residues 484-504; sequence AFFTGAFGMCNIYVLLLLAMY. The Cytoplasmic segment spans residues 505 to 549; sequence APSHKHYRGASQLIDENDDDEIMEDPSNQHTESNAMTTFLKPSTD. A disordered region spans residues 524–549; it reads DEIMEDPSNQHTESNAMTTFLKPSTD. Residues 530–549 show a composition bias toward polar residues; it reads PSNQHTESNAMTTFLKPSTD.

This sequence belongs to the wntless family. As to expression, expressed in the tail hypodermis, stomatointestinal muscle, the mesoblast cell M and its descendants, CAN neurons, the developing vulva, the pharynx and the pharyngeal intestinal valve.

Its subcellular location is the cell membrane. It is found in the early endosome membrane. It localises to the golgi apparatus membrane. The protein localises to the basal cell membrane. The protein resides in the late endosome membrane. In terms of biological role, probable sorting receptor which regulates endocytosis and secretion of the wnt ligand egl-20. Recycling of mig-14 from the plasma membrane to the Golgi apparatus by the retromer complex is essential for its function. Its endosomal trafficking is regulated by its association with sorting nexin snx-3 on early endosomes and the mtm-6/mtm-9 myotubularin complex. Required in embryonic development for endoderm specification and the correct positioning and orientation of the mitotic spindles and division planes in blastomere cells. Functions during vulval development, playing a role in vulval precursor cell fate specification. During development, specifically regulates the migration of HSN neurons, the left Q neuroblast (QL) and its descendants and the distal tip cells of the gonads. Positioning of Q neuroblasts may be both dependent and independent of hox gene mab-5. Involved in establishing ALM and PLM neuronal cell polarity. This Caenorhabditis elegans protein is Protein wntless homolog.